The chain runs to 461 residues: GTPase Der (461 aa).

EngA-type G domains are found at residues 25–188 (PVVA…PNVA) and 198–371 (RRVA…ASWD). GTP-binding positions include 31–38 (GRPNVGKS), 78–82 (DTGGW), 140–143 (NKVD), 204–211 (GKPNVGKS), 251–255 (DTAGL), and 316–319 (NKWD). Positions 372 to 454 (TRIATGPLNI…PIRINVRVRE (83 aa)) constitute a KH-like domain.

It belongs to the TRAFAC class TrmE-Era-EngA-EngB-Septin-like GTPase superfamily. EngA (Der) GTPase family. In terms of assembly, associates with the 50S ribosomal subunit.

Its function is as follows. GTPase that plays an essential role in the late steps of ribosome biogenesis. The polypeptide is GTPase Der (Mycobacterium leprae (strain TN)).